A 718-amino-acid chain; its full sequence is Catalase-peroxidase (718 aa).

Residues 1–24 (MDQKSDNAGKCPVAHTVPKGRSNR) form a disordered region. A cross-link (tryptophyl-tyrosyl-methioninium (Trp-Tyr) (with M-243)) is located at residues 95-217 (WHSAGTYRIT…LAAVQMGLIY (123 aa)). H96 acts as the Proton acceptor in catalysis. The segment at residues 217-243 (YVNPEGPNGNPDPVAAAREIRETFARM) is a cross-link (tryptophyl-tyrosyl-methioninium (Tyr-Met) (with W-95)). Residue H258 participates in heme b binding.

It belongs to the peroxidase family. Peroxidase/catalase subfamily. Homodimer or homotetramer. It depends on heme b as a cofactor. Post-translationally, formation of the three residue Trp-Tyr-Met cross-link is important for the catalase, but not the peroxidase activity of the enzyme.

The catalysed reaction is H2O2 + AH2 = A + 2 H2O. The enzyme catalyses 2 H2O2 = O2 + 2 H2O. Bifunctional enzyme with both catalase and broad-spectrum peroxidase activity. The sequence is that of Catalase-peroxidase from Sinorhizobium fredii (strain NBRC 101917 / NGR234).